Here is a 92-residue protein sequence, read N- to C-terminus: Small ribosomal subunit protein bS18 (92 aa).

The interval 1-22 is disordered; that stretch reads MADERAPQRSTSGPRKKRPFQR.

The protein belongs to the bacterial ribosomal protein bS18 family. Part of the 30S ribosomal subunit. Forms a tight heterodimer with protein bS6.

In terms of biological role, binds as a heterodimer with protein bS6 to the central domain of the 16S rRNA, where it helps stabilize the platform of the 30S subunit. The polypeptide is Small ribosomal subunit protein bS18 (Citrifermentans bemidjiense (strain ATCC BAA-1014 / DSM 16622 / JCM 12645 / Bem) (Geobacter bemidjiensis)).